Reading from the N-terminus, the 756-residue chain is 5-methyltetrahydropteroyltriglutamate--homocysteine methyltransferase (756 aa).

5-methyltetrahydropteroyltri-L-glutamate contacts are provided by residues Arg-16–Lys-19 and Lys-112. Residues Ile-432–Ser-434 and Glu-485 each bind L-homocysteine. L-methionine-binding positions include Ile-432 to Ser-434 and Glu-485. Residues Arg-516 to Cys-517 and Trp-562 contribute to the 5-methyltetrahydropteroyltri-L-glutamate site. Residue Asp-600 coordinates L-homocysteine. Asp-600 contacts L-methionine. Glu-606 is a 5-methyltetrahydropteroyltri-L-glutamate binding site. Residues His-642, Cys-644, and Glu-666 each contribute to the Zn(2+) site. His-695 functions as the Proton donor in the catalytic mechanism. Cys-727 is a binding site for Zn(2+).

It belongs to the vitamin-B12 independent methionine synthase family. Zn(2+) serves as cofactor.

It carries out the reaction 5-methyltetrahydropteroyltri-L-glutamate + L-homocysteine = tetrahydropteroyltri-L-glutamate + L-methionine. The protein operates within amino-acid biosynthesis; L-methionine biosynthesis via de novo pathway; L-methionine from L-homocysteine (MetE route): step 1/1. In terms of biological role, catalyzes the transfer of a methyl group from 5-methyltetrahydrofolate to homocysteine resulting in methionine formation. In Haemophilus influenzae (strain PittGG), this protein is 5-methyltetrahydropteroyltriglutamate--homocysteine methyltransferase.